A 331-amino-acid polypeptide reads, in one-letter code: UBX domain-containing protein 2B (331 aa).

Disordered regions lie at residues 1 to 26 (MAEG…SARD) and 40 to 65 (KCKS…QRFY). Ala-2 carries the post-translational modification N-acetylalanine. Residue Ser-56 is modified to Phosphoserine. Residue Thr-59 is modified to Phosphothreonine. A Phosphoserine modification is found at Ser-66. One can recognise an SEP domain in the interval 141-206 (DVQILLKLWS…MEDHQDQEYI (66 aa)). A phosphoserine mark is found at Ser-231, Ser-234, and Ser-235. Residues 252–329 (DSVPTTKIQI…DILNTVLLQQ (78 aa)) form the UBX domain.

This sequence belongs to the NSFL1C family. As to quaternary structure, interacts with VCP. Does not bind ubiquitin.

It is found in the nucleus. The protein localises to the cytoplasm. It localises to the cytosol. Its subcellular location is the endoplasmic reticulum. The protein resides in the golgi apparatus. It is found in the cytoskeleton. The protein localises to the microtubule organizing center. It localises to the centrosome. In terms of biological role, adapter protein required for Golgi and endoplasmic reticulum biogenesis. Involved in Golgi and endoplasmic reticulum maintenance during interphase and in their reassembly at the end of mitosis. The complex formed with VCP has membrane fusion activity; membrane fusion activity requires USO1-GOLGA2 tethering and BET1L. VCPIP1 is also required, but not its deubiquitinating activity. Together with NSFL1C/p47, regulates the centrosomal levels of kinase AURKA/Aurora A during mitotic progression by promoting AURKA removal from centrosomes in prophase. Also, regulates spindle orientation during mitosis. This is UBX domain-containing protein 2B (UBXN2B) from Homo sapiens (Human).